The primary structure comprises 361 residues: P2Y purinoceptor 4 (361 aa).

The disordered stretch occupies residues 1–20 (MTSAESLLFTSLGPSPSSGD). Residues 1–30 (MTSAESLLFTSLGPSPSSGDGDCRFNEEFK) are Extracellular-facing. A helical transmembrane segment spans residues 31 to 58 (FILLPMSYAVVFVLGLALNAPTLWLFLF). Topologically, residues 59-68 (RLRPWDATAT) are cytoplasmic. The chain crosses the membrane as a helical span at residues 69–91 (YMFHLALSDTLYVLSLPTLVYYY). Residues 92–108 (AARNHWPFGTGLCKFVR) are Extracellular-facing. A disulfide bridge connects residues cysteine 104 and cysteine 181. Residues 109–127 (FLFYWNLYCSVLFLTCISV) form a helical membrane-spanning segment. At 128–149 (HRYLGICHPLRAIRWGRPRFAS) the chain is on the cytoplasmic side. Residues 150 to 170 (LLCLGVWLVVAGCLVPNLFFV) form a helical membrane-spanning segment. Residues 171–192 (TTNANGTTILCHDTTLPEEFDH) lie on the Extracellular side of the membrane. N-linked (GlcNAc...) asparagine glycosylation is present at asparagine 175. A helical transmembrane segment spans residues 193–218 (YVYFSSAVMVLLFGLPFLITLVCYGL). Topologically, residues 219 to 242 (MARRLYRPLPGAGQSSSRLRSLRT) are cytoplasmic. Residues 243–265 (IAVVLTVFAVCFVPFHITRTIYY) form a helical membrane-spanning segment. Residues 266–283 (QARLLQADCHVLNIVNVV) are Extracellular-facing. Residues 284–305 (YKVTRPLASANSCLDPVLYLFT) traverse the membrane as a helical segment. Residues 306–361 (GDKYRNQLQQLCRGSKPKPRTAASSLALVTLHEESISRWADTHQDSTFSAYEGDRL) lie on the Cytoplasmic side of the membrane.

It belongs to the G-protein coupled receptor 1 family. In terms of processing, phosphorylation of Ser-329 and Ser-330 is a key step in agonist-dependent desensitization and loss of surface P2RY4. This phosphorylation does not involve PKC, nor other calcium-activated kinases. In terms of tissue distribution, widely expressed at low levels. In brain, higher expression in the pineal gland and ventricular system.

The protein localises to the cell membrane. Receptor for ATP and UTP coupled to G-proteins that activate a phosphatidylinositol-calcium second messenger system. Not activated by ADP or UDP. The protein is P2Y purinoceptor 4 (P2ry4) of Rattus norvegicus (Rat).